Reading from the N-terminus, the 296-residue chain is HVA22-like protein i (296 aa).

A disordered region spans residues 146–296; that stretch reads STPRPQPPQK…LRKTRSEESR (151 aa). A compositionally biased stretch (low complexity) spans 180 to 193; the sequence is VSLSSSSSSSSSEN. Residues 223–233 are compositionally biased toward polar residues; that stretch reads AGTTQIAQKSV. Acidic residues predominate over residues 251–261; it reads QIEEVEGEAES. Basic and acidic residues predominate over residues 270 to 281; that stretch reads GPKETVMEETIR.

The protein belongs to the DP1 family.

This chain is HVA22-like protein i (HVA22I), found in Arabidopsis thaliana (Mouse-ear cress).